The primary structure comprises 220 residues: LHFPL tetraspan subfamily member 1 protein (220 aa).

Positions 1–20 (MRSSLTMVGTLWAFLSLVTA) are cleaved as a signal peptide. A run of 2 helical transmembrane segments spans residues 86–106 (VVTGAGCALLLLVALAAVLGC) and 122–142 (AAQFVGGLLISSGCALYPLGW). The N-linked (GlcNAc...) asparagine glycan is linked to N153. The helical transmembrane segment at 165 to 185 (LGWAYYCAGGGAAAAMLICTW) threads the bilayer.

It belongs to the LHFP family. Widely expressed. Expressed at high levels in lung, thymus, skeletal muscle, colon and ovary.

The protein resides in the membrane. The protein is LHFPL tetraspan subfamily member 1 protein of Homo sapiens (Human).